A 261-amino-acid chain; its full sequence is tRNA (guanine-N(1)-)-methyltransferase (261 aa).

S-adenosyl-L-methionine contacts are provided by residues Gly113 and 133 to 138; that span reads IGDYVL.

It belongs to the RNA methyltransferase TrmD family. Homodimer.

The protein localises to the cytoplasm. The enzyme catalyses guanosine(37) in tRNA + S-adenosyl-L-methionine = N(1)-methylguanosine(37) in tRNA + S-adenosyl-L-homocysteine + H(+). Its function is as follows. Specifically methylates guanosine-37 in various tRNAs. The sequence is that of tRNA (guanine-N(1)-)-methyltransferase from Xylella fastidiosa (strain M23).